The primary structure comprises 393 residues: NADH-quinone oxidoreductase subunit H 2 (393 aa).

The next 10 helical transmembrane spans lie at 13–33 (VLVT…IVLV), 79–99 (AIFW…FAVI), 112–132 (VGLL…ILGG), 158–178 (LAFA…QGIV), 186–206 (VWGI…YIIA), 240–260 (LYFL…VTLF), 278–298 (LNYG…FTLI), 309–329 (VLLG…IPMV), 333–353 (MIGL…MIWF), and 368–388 (IGWK…AVLG).

The protein belongs to the complex I subunit 1 family. As to quaternary structure, NDH-1 is composed of 14 different subunits. Subunits NuoA, H, J, K, L, M, N constitute the membrane sector of the complex.

The protein localises to the cell inner membrane. It carries out the reaction a quinone + NADH + 5 H(+)(in) = a quinol + NAD(+) + 4 H(+)(out). Its function is as follows. NDH-1 shuttles electrons from NADH, via FMN and iron-sulfur (Fe-S) centers, to quinones in the respiratory chain. The immediate electron acceptor for the enzyme in this species is believed to be ubiquinone. Couples the redox reaction to proton translocation (for every two electrons transferred, four hydrogen ions are translocated across the cytoplasmic membrane), and thus conserves the redox energy in a proton gradient. This subunit may bind ubiquinone. The sequence is that of NADH-quinone oxidoreductase subunit H 2 from Solibacter usitatus (strain Ellin6076).